Reading from the N-terminus, the 350-residue chain is Ion-translocating oxidoreductase complex subunit D (350 aa).

A run of 4 helical transmembrane segments spans residues 20-40 (VMLW…LFFG), 42-62 (GNLI…AAFL), 89-109 (LPQF…IVVA), and 120-140 (PFNP…VAMT). At Thr178 the chain carries FMN phosphoryl threonine. 5 helical membrane-spanning segments follow: residues 204-224 (LIAR…VLLI), 228-248 (IITW…SLAF), 255-275 (YAPL…FFIA), 282-302 (ATSH…VYLI), and 306-326 (GNYP…VPFI).

It belongs to the NqrB/RnfD family. The complex is composed of six subunits: RnfA, RnfB, RnfC, RnfD, RnfE and RnfG. FMN is required as a cofactor.

The protein localises to the cell inner membrane. In terms of biological role, part of a membrane-bound complex that couples electron transfer with translocation of ions across the membrane. This Marinobacter nauticus (strain ATCC 700491 / DSM 11845 / VT8) (Marinobacter aquaeolei) protein is Ion-translocating oxidoreductase complex subunit D.